Here is a 256-residue protein sequence, read N- to C-terminus: Trans-aconitate 2-methyltransferase (256 aa).

The protein belongs to the methyltransferase superfamily. Tam family.

It localises to the cytoplasm. The enzyme catalyses trans-aconitate + S-adenosyl-L-methionine = (E)-3-(methoxycarbonyl)pent-2-enedioate + S-adenosyl-L-homocysteine. In terms of biological role, catalyzes the S-adenosylmethionine monomethyl esterification of trans-aconitate. The sequence is that of Trans-aconitate 2-methyltransferase from Rhodopseudomonas palustris (strain BisA53).